The following is a 454-amino-acid chain: UPF0210 protein Ppro_0613 (454 aa).

The protein belongs to the UPF0210 family. As to quaternary structure, homodimer.

This is UPF0210 protein Ppro_0613 from Pelobacter propionicus (strain DSM 2379 / NBRC 103807 / OttBd1).